Consider the following 372-residue polypeptide: Protein RecA (372 aa).

66 to 73 (GPESSGKT) contributes to the ATP binding site. The segment at 328 to 359 (GVGVRPEEPTATESGPDAATAESAPAVPAPAT) is disordered. Residues 345–359 (AATAESAPAVPAPAT) show a composition bias toward low complexity.

The protein belongs to the RecA family.

The protein localises to the cytoplasm. Can catalyze the hydrolysis of ATP in the presence of single-stranded DNA, the ATP-dependent uptake of single-stranded DNA by duplex DNA, and the ATP-dependent hybridization of homologous single-stranded DNAs. It interacts with LexA causing its activation and leading to its autocatalytic cleavage. This Streptomyces ambofaciens protein is Protein RecA.